The sequence spans 216 residues: Probable calcium-binding protein CML35 (216 aa).

A disordered region spans residues threonine 18–serine 58. Residues serine 23 to serine 44 show a composition bias toward low complexity. EF-hand domains lie at aspartate 66–glutamate 101, proline 103–glutamate 138, valine 141–glutamate 176, and cysteine 178–aspartate 213. Positions 79, 81, 83, and 90 each coordinate Ca(2+). Aspartate 154, aspartate 156, asparagine 158, lysine 160, glutamate 165, aspartate 191, asparagine 193, aspartate 195, and aspartate 202 together coordinate Ca(2+).

In terms of biological role, potential calcium sensor. In Arabidopsis thaliana (Mouse-ear cress), this protein is Probable calcium-binding protein CML35 (CML35).